We begin with the raw amino-acid sequence, 193 residues long: Peptide deformylase (193 aa).

Residues C111 and H155 each coordinate Fe cation. The active site involves E156. Fe cation is bound at residue H159.

The protein belongs to the polypeptide deformylase family. It depends on Fe(2+) as a cofactor.

It carries out the reaction N-terminal N-formyl-L-methionyl-[peptide] + H2O = N-terminal L-methionyl-[peptide] + formate. In terms of biological role, removes the formyl group from the N-terminal Met of newly synthesized proteins. Requires at least a dipeptide for an efficient rate of reaction. N-terminal L-methionine is a prerequisite for activity but the enzyme has broad specificity at other positions. The chain is Peptide deformylase from Mycoplasma genitalium (strain ATCC 33530 / DSM 19775 / NCTC 10195 / G37) (Mycoplasmoides genitalium).